The sequence spans 284 residues: MDAIKKKMQMLKLDKENAIDRAEQAEADKKQAEDRCKQLEEEQQALQKKLKGTEDEVEKYSESVKDAQEKLEQAEKKATDAEADVASLNRRIQLVEEELDRAQERLATALQKLEEAEKAADESERGMKVIENRAMKDEEKMELQEMQLKEAKHIAEDSDRKYEEVARKLVILEGELERSEERAEVAESKCGDLEEELKIVTNNLKSLEAQADKYSTKEDKYEEEIKLLEEKLKEAETRAEFAERSVAKLEKTIDDLEDEVYAQKMKYKAISEELDNALNDITSL.

N-acetylmethionine is present on Met1. A disordered region spans residues 1-78 (MDAIKKKMQM…EKLEQAEKKA (78 aa)). Residues 1 to 284 (MDAIKKKMQM…DNALNDITSL (284 aa)) adopt a coiled-coil conformation. 2 stretches are compositionally biased toward basic and acidic residues: residues 12–40 (KLDKENAIDRAEQAEADKKQAEDRCKQLE) and 51–78 (KGTEDEVEKYSESVKDAQEKLEQAEKKA). Phosphothreonine is present on Thr53. At Ser61 the chain carries Phosphoserine; by PIK3CG. A Phosphothreonine modification is found at Thr79. Ser87 carries the post-translational modification Phosphoserine. Thr108 is subject to Phosphothreonine. A disordered region spans residues 117 to 136 (EKAADESERGMKVIENRAMK). Residues Ser158, Ser206, and Ser215 each carry the phosphoserine modification. Thr252 carries the phosphothreonine modification. Tyr261 carries the phosphotyrosine modification. Ser271 is modified (phosphoserine). A Phosphothreonine modification is found at Thr282. Ser283 carries the phosphoserine modification.

This sequence belongs to the tropomyosin family. In terms of assembly, homodimer. Heterodimer of an alpha (TPM1, TPM3 or TPM4) and a beta (TPM2) chain. Post-translationally, phosphorylated on Ser-61 by PIK3CG. Phosphorylation on Ser-61 is required for ADRB2 internalization.

The protein resides in the cytoplasm. It is found in the cytoskeleton. Its function is as follows. Binds to actin filaments in muscle and non-muscle cells. Plays a central role, in association with the troponin complex, in the calcium dependent regulation of vertebrate striated muscle contraction. Smooth muscle contraction is regulated by interaction with caldesmon. In non-muscle cells is implicated in stabilizing cytoskeleton actin filaments. The non-muscle isoform may have a role in agonist-mediated receptor internalization. The polypeptide is Tropomyosin beta chain (Tpm2) (Mus musculus (Mouse)).